Consider the following 426-residue polypeptide: Enolase (426 aa).

(2R)-2-phosphoglycerate is bound at residue Gln-165. The active-site Proton donor is the Glu-209. Residues Asp-244, Glu-287, and Asp-313 each contribute to the Mg(2+) site. The (2R)-2-phosphoglycerate site is built by Lys-338, Arg-367, Ser-368, and Lys-389. Catalysis depends on Lys-338, which acts as the Proton acceptor.

Belongs to the enolase family. Mg(2+) serves as cofactor.

The protein resides in the cytoplasm. It is found in the secreted. The protein localises to the cell surface. It carries out the reaction (2R)-2-phosphoglycerate = phosphoenolpyruvate + H2O. It functions in the pathway carbohydrate degradation; glycolysis; pyruvate from D-glyceraldehyde 3-phosphate: step 4/5. Catalyzes the reversible conversion of 2-phosphoglycerate (2-PG) into phosphoenolpyruvate (PEP). It is essential for the degradation of carbohydrates via glycolysis. The chain is Enolase from Methanococcus maripaludis (strain DSM 14266 / JCM 13030 / NBRC 101832 / S2 / LL).